The chain runs to 363 residues: Methylthioribose-1-phosphate isomerase (363 aa).

Asp-253 (proton donor) is an active-site residue.

This sequence belongs to the eIF-2B alpha/beta/delta subunits family. MtnA subfamily.

The protein localises to the cytoplasm. It localises to the nucleus. The catalysed reaction is 5-(methylsulfanyl)-alpha-D-ribose 1-phosphate = 5-(methylsulfanyl)-D-ribulose 1-phosphate. It participates in amino-acid biosynthesis; L-methionine biosynthesis via salvage pathway; L-methionine from S-methyl-5-thio-alpha-D-ribose 1-phosphate: step 1/6. Its function is as follows. Catalyzes the interconversion of methylthioribose-1-phosphate (MTR-1-P) into methylthioribulose-1-phosphate (MTRu-1-P). The polypeptide is Methylthioribose-1-phosphate isomerase (Drosophila grimshawi (Hawaiian fruit fly)).